A 226-amino-acid chain; its full sequence is Putative ankyrin repeat protein RF_0939 (226 aa).

ANK repeat units follow at residues 56 to 86 (VSTT…NVNM), 91 to 120 (FKDT…AVNG), 125 to 154 (LLGP…AVDQ), and 157 to 194 (SGET…DTNA).

The sequence is that of Putative ankyrin repeat protein RF_0939 from Rickettsia felis (strain ATCC VR-1525 / URRWXCal2) (Rickettsia azadi).